The primary structure comprises 669 residues: DNA ligase (669 aa).

NAD(+) contacts are provided by residues D34–D38, S83–L84, and E114. K116 (N6-AMP-lysine intermediate) is an active-site residue. NAD(+) contacts are provided by R137, E171, K287, and K311. 4 residues coordinate Zn(2+): C405, C408, C423, and C428. One can recognise a BRCT domain in the interval N591–K669.

Belongs to the NAD-dependent DNA ligase family. LigA subfamily. It depends on Mg(2+) as a cofactor. Requires Mn(2+) as cofactor.

It carries out the reaction NAD(+) + (deoxyribonucleotide)n-3'-hydroxyl + 5'-phospho-(deoxyribonucleotide)m = (deoxyribonucleotide)n+m + AMP + beta-nicotinamide D-nucleotide.. Its function is as follows. DNA ligase that catalyzes the formation of phosphodiester linkages between 5'-phosphoryl and 3'-hydroxyl groups in double-stranded DNA using NAD as a coenzyme and as the energy source for the reaction. It is essential for DNA replication and repair of damaged DNA. The polypeptide is DNA ligase (Bacillus mycoides (strain KBAB4) (Bacillus weihenstephanensis)).